Reading from the N-terminus, the 398-residue chain is MGRPESITVLGATGSIGVSTLDVISRHPERYQVYALTAERRWQLLATQCLEHQPRYAVIRDADSAGLLEQELRKQGCLTEVLYGADALASVAGASEVDMVMAAIVGAAGLLPTLAAVKAGKKVLLANKEVLVMAGGLFTQAVAEHGAQLLPIDSEHNAIFQCLPNHRPDYLQQGLISSGVRKILLTASGGPFRNTPIHELARVTPEQACAHPNWSMGQKISVDSASMMNKGLELIEACWLFNTSPRQVEVVIHPQSVIHSMVEYIDGSVLAQLGNPDMRTPIAHALAWPERIESGVASLDLIMTARLDFSAPDVQRFPCLRLAQEAVVSGGNAPVLLNAANEIAVAAFLERRLGFDQIPRLISSVMDAIPFSEPETLELVQAADAEARAVAMQLLARW.

NADPH is bound by residues Thr13, Gly14, Ser15, Ile16, Arg40, and Asn127. Lys128 lines the 1-deoxy-D-xylulose 5-phosphate pocket. Position 129 (Glu129) interacts with NADPH. Residue Asp153 participates in Mn(2+) binding. 1-deoxy-D-xylulose 5-phosphate-binding residues include Ser154, Glu155, Ser188, and His211. Position 155 (Glu155) interacts with Mn(2+). Position 217 (Gly217) interacts with NADPH. 1-deoxy-D-xylulose 5-phosphate-binding residues include Ser224, Asn229, Lys230, and Glu233. Glu233 provides a ligand contact to Mn(2+).

Belongs to the DXR family. Requires Mg(2+) as cofactor. The cofactor is Mn(2+).

It catalyses the reaction 2-C-methyl-D-erythritol 4-phosphate + NADP(+) = 1-deoxy-D-xylulose 5-phosphate + NADPH + H(+). Its pathway is isoprenoid biosynthesis; isopentenyl diphosphate biosynthesis via DXP pathway; isopentenyl diphosphate from 1-deoxy-D-xylulose 5-phosphate: step 1/6. Its function is as follows. Catalyzes the NADPH-dependent rearrangement and reduction of 1-deoxy-D-xylulose-5-phosphate (DXP) to 2-C-methyl-D-erythritol 4-phosphate (MEP). This Cellvibrio japonicus (strain Ueda107) (Pseudomonas fluorescens subsp. cellulosa) protein is 1-deoxy-D-xylulose 5-phosphate reductoisomerase.